The chain runs to 1349 residues: Periaxin (1349 aa).

Residue S7 is modified to Phosphoserine. The 84-residue stretch at 16-99 (LVEIIVETEA…YKVSFCLKRT (84 aa)) folds into the PDZ domain. A Nuclear export signal motif is present at residues 70-84 (VFFENFKYEDALRLL). At S133 the chain carries Phosphoserine. 41 consecutive repeat copies span residues 402–406 (PPEVK), 410–414 (GPEVK), 418–422 (VPEVK), 426–430 (MPEPV), 431–435 (LPEVR), 436–440 (LPEVE), 444–448 (VSEMK), 452–456 (VPEMA), 457–461 (VPEVR), 462–466 (LPEVQ), 467–471 (LPKVP), 472–476 (EMKLP), 477–481 (EVKLP), 485–489 (EMAVP), 493–497 (LPEVQ), 501–505 (VPEMK), 506–510 (LPEVK), 514–518 (VPEMA), 519–523 (VPEVR), 524–528 (LPEVQ), 532–536 (VPEMK), 537–549 (LPKVPEMKCPEMK), 553–557 (VPEMA), 558–562 (VPEVR), 563–567 (LPEVQ), 571–575 (VPEVK), 576–580 (LPEVK), 589–593 (VPEMA), 594–598 (VPEVH), 599–603 (LPEVQ), 612–616 (VPDVK), 617–621 (LPEVK), 622–626 (LPEIK), 630–634 (VPEMV), 635–639 (VPDVH), 643–647 (VHLPK), 648–652 (VSEMR), 653–657 (LPEVQ), 661–665 (VPEVH), 669–673 (APEVK), and 674–678 (LPKAP). The 41 X 5 AA approximate tandem repeats of [LVMGIE]-[PSM]-[EDKA]-[LIVMA]-[AQKHPRT]; that may have a tripeptide spacer of [ALKD]-[IPV]-[KPH] stretch occupies residues 402–678 (PPEVKVPKGP…APEVKLPKAP (277 aa)). Phosphoserine occurs at positions 794 and 974. Over residues 1207–1218 (AKEGAEEGEKAK) the composition is skewed to basic and acidic residues. The interval 1207-1349 (AKEGAEEGEK…RMEGAQAAVI (143 aa)) is disordered. Residues 1232–1242 (SEAVSGEGSPS) are compositionally biased toward low complexity. Phosphoserine is present on residues S1236, S1240, S1242, S1289, S1295, and S1327.

It belongs to the periaxin family. Homodimer (via PDZ domain). Interacts with SCN10A. Found in a complex with SCN10A. Interacts with DRP2. Identified in a dystroglycan complex that contains at least PRX, DRP2, UTRN, DMD and DAG1. Detected in a complex composed of at least EZR, AHNAK, PPL and PRX. Identified in a complex with EZR, AHNAK, BFSP1, BFSP2, ANK2, PLEC, VIM and spectrin. In terms of tissue distribution, detected in eye lens (at protein level).

The protein resides in the nucleus. Its subcellular location is the cytoplasm. The protein localises to the cell membrane. It localises to the cell junction. It is found in the adherens junction. Scaffolding protein that functions as part of a dystroglycan complex in Schwann cells, and as part of EZR and AHNAK-containing complexes in eye lens fiber cells. Required for the maintenance of the peripheral myelin sheath that is essential for normal transmission of nerve impulses and normal perception of sensory stimuli. Required for normal transport of MBP mRNA from the perinuclear to the paranodal regions. Required for normal remyelination after nerve injury. Required for normal elongation of Schwann cells and normal length of the internodes between the nodes of Ranvier. The demyelinated nodes of Ranvier permit saltatory transmission of nerve impulses; shorter internodes cause slower transmission of nerve impulses. Required for the formation of appositions between the abaxonal surface of the myelin sheath and the Schwann cell plasma membrane; the Schwann cell cytoplasm is restricted to regions between these appositions. Required for the formation of Cajal bands and of Schmidt-Lanterman incisures that correspond to short, cytoplasm-filled regions on myelinated nerves. Recruits DRP2 to the Schwann cell plasma membrane. Required for normal protein composition of the eye lens fiber cell plasma membrane and normal eye lens fiber cell morphology. This is Periaxin (PRX) from Bos taurus (Bovine).